A 414-amino-acid chain; its full sequence is Putative transporter AmpG 4 (414 aa).

12 helical membrane-spanning segments follow: residues 15-35 (IFILGIVSGMPLVIIFSTLAV), 44-63 (IAVITTFAVARLSYSLKVFW), 84-104 (WLILCSSLMALVLIAMSKENP), 109-129 (TSFYFLTILLGFLSSTFDIAV), 150-170 (VFGYRIGMLITGAGALYLAEI), 177-197 (LTFCVIAIIFVVATIFIITVN), 230-250 (FAVTILLAVIFFKLGDAMLGA), 268-288 (IIAKLYGLIATLVGGFVGGIV), 295-315 (FKGLIITGIAQSLTHFAFIWL), 324-344 (ALLIAITIENFAAAMGATALV), 360-379 (YALLSSASSLCNNTVTIYAG), and 389-409 (GFFLFTIILALPALFILMYLN).

It belongs to the major facilitator superfamily.

It localises to the cell inner membrane. The protein is Putative transporter AmpG 4 (ampG4) of Rickettsia conorii (strain ATCC VR-613 / Malish 7).